A 538-amino-acid polypeptide reads, in one-letter code: Xylosidase/arabinosidase 43B (538 aa).

Residue E367 is the Proton donor of the active site.

This sequence belongs to the glycosyl hydrolase 43 family.

The enzyme catalyses Hydrolysis of (1-&gt;4)-beta-D-xylans, to remove successive D-xylose residues from the non-reducing termini.. It carries out the reaction Hydrolysis of terminal non-reducing alpha-L-arabinofuranoside residues in alpha-L-arabinosides.. With respect to regulation, activity is inhibited by Ag(+), Li(+), Cu(2+), Cr(3+), Co(3+), Ni(2+), Mg(2+), Zn(2+), EDTA, SDS and beta-mercaptoethanol; but not by Mn(2+), Pb(2+), Ca(2+) and Fe(3+). In terms of biological role, bifunctional beta-xylosidase/alpha-L-arabinosidases with a low level of xylanase activity. Is most active on 4-nitrophenyl beta-D-xylopyranoside (pNPX) (defined as 100%), moderate on p-nitrophenyl-alpha-L-arabinofuranoside (pNPA) (56.6%), and weak on beechwood xylan (5.7%) and birchwood xylan (2.7%). Is able to attack xylooligosacchardies with degrees of polymerisation of 2-5, releasing the amounts of reducing sugars in the order of xylopentose &gt; xylotetraose &gt; xylotriose &gt; xylobiose, i.e. the rate of xylose released from xylooligosacchardies increased with the chain length. No activity was detected in the presence of carboxymethyl cellulose-sodium (CMC-Na), sugar beet arabinan, AZCL-arabinan (debranched), 4-nitrophenyl a-D - galactopyranoside, 2-nitrophenyl beta-D-galactopyranoside, and 4-nitrophenyl alpha-D-glucopyranoside. This Humicola insolens (Soft-rot fungus) protein is Xylosidase/arabinosidase 43B.